Consider the following 336-residue polypeptide: Glyceraldehyde-3-phosphate dehydrogenase (336 aa).

Residues 12–13 (RI), aspartate 34, and arginine 79 each bind NAD(+). D-glyceraldehyde 3-phosphate-binding positions include 150–152 (SCT), threonine 181, 210–211 (TG), and arginine 233. Cysteine 151 acts as the Nucleophile in catalysis. Position 315 (asparagine 315) interacts with NAD(+).

The protein belongs to the glyceraldehyde-3-phosphate dehydrogenase family. In terms of assembly, homotetramer.

It localises to the cytoplasm. The catalysed reaction is D-glyceraldehyde 3-phosphate + phosphate + NAD(+) = (2R)-3-phospho-glyceroyl phosphate + NADH + H(+). It functions in the pathway carbohydrate degradation; glycolysis; pyruvate from D-glyceraldehyde 3-phosphate: step 1/5. The protein is Glyceraldehyde-3-phosphate dehydrogenase (gpdA) of Aspergillus niger.